The primary structure comprises 101 residues: Small ribosomal subunit protein uS14 (101 aa).

It belongs to the universal ribosomal protein uS14 family. As to quaternary structure, part of the 30S ribosomal subunit. Contacts proteins S3 and S10.

Functionally, binds 16S rRNA, required for the assembly of 30S particles and may also be responsible for determining the conformation of the 16S rRNA at the A site. The polypeptide is Small ribosomal subunit protein uS14 (Francisella tularensis subsp. novicida (strain U112)).